The chain runs to 346 residues: Glycosyltransferase 1 domain-containing protein 1 (346 aa).

The N-terminal stretch at 1 to 16 (MRLLFLAVLRPHTGNA) is a signal peptide.

It belongs to the glycosyltransferase group 1 family. Glycosyltransferase 4 subfamily.

It is found in the secreted. The chain is Glycosyltransferase 1 domain-containing protein 1 (GLT1D1) from Pongo abelii (Sumatran orangutan).